Here is a 275-residue protein sequence, read N- to C-terminus: Large ribosomal subunit protein uL2 (275 aa).

The tract at residues 223-275 is disordered; that stretch reads AAMNANDHPHGGGEAKAGQGNPHPVTPWGVPTKGYKTRKNKRTQQFIVRDRRG.

The protein belongs to the universal ribosomal protein uL2 family. Part of the 50S ribosomal subunit. Forms a bridge to the 30S subunit in the 70S ribosome.

Functionally, one of the primary rRNA binding proteins. Required for association of the 30S and 50S subunits to form the 70S ribosome, for tRNA binding and peptide bond formation. It has been suggested to have peptidyltransferase activity; this is somewhat controversial. Makes several contacts with the 16S rRNA in the 70S ribosome. The chain is Large ribosomal subunit protein uL2 from Xanthomonas campestris pv. campestris (strain 8004).